The sequence spans 538 residues: Atos homolog protein B (538 aa).

Composition is skewed to polar residues over residues 1–12 (MRHVQAETSPSS) and 129–141 (GGSSTSPWTSGAR). Disordered stretches follow at residues 1-98 (MRHV…EPPT), 129-185 (GGSS…QLHT), and 201-303 (LVSG…PTDC). Residues 227–238 (HTPPGPGPPGPC) are compositionally biased toward pro residues. A phosphoserine mark is found at S254 and S255. The interval 348-430 (LLGNFEESLL…VPKVGTIQVT (83 aa)) is required for macropage invasion. Positions 436–444 (QTVVKMFLV) are transactivation domain 1 (TAD1).

It belongs to the ATOS family.

It is found in the nucleus. Transcription regulator that may syncronize transcriptional and translational programs. In Bos taurus (Bovine), this protein is Atos homolog protein B.